A 947-amino-acid polypeptide reads, in one-letter code: Protein translocase subunit SecA 1 (947 aa).

ATP is bound by residues glutamine 87, glycine 105–threonine 109, and aspartate 525. A disordered region spans residues aspartate 907–lysine 937. Positions aspartate 908–arginine 918 are enriched in basic and acidic residues. 4 residues coordinate Zn(2+): cysteine 931, cysteine 933, cysteine 942, and histidine 943.

It belongs to the SecA family. As to quaternary structure, monomer and homodimer. Part of the essential Sec protein translocation apparatus which comprises SecA, SecYEG and auxiliary proteins SecDF-YajC and YidC. Zn(2+) is required as a cofactor.

The protein localises to the cell inner membrane. It localises to the cytoplasm. It carries out the reaction ATP + H2O + cellular proteinSide 1 = ADP + phosphate + cellular proteinSide 2.. Functionally, part of the Sec protein translocase complex. Interacts with the SecYEG preprotein conducting channel. Has a central role in coupling the hydrolysis of ATP to the transfer of proteins into and across the cell membrane, serving both as a receptor for the preprotein-SecB complex and as an ATP-driven molecular motor driving the stepwise translocation of polypeptide chains across the membrane. This Rhodopseudomonas palustris (strain BisA53) protein is Protein translocase subunit SecA 1.